The sequence spans 547 residues: T-complex protein 1 subunit alpha (547 aa).

This sequence belongs to the TCP-1 chaperonin family. In terms of assembly, heterooligomeric complex of about 850 to 900 kDa that forms two stacked rings, 12 to 16 nm in diameter.

It is found in the cytoplasm. Molecular chaperone; assists the folding of proteins upon ATP hydrolysis. Known to play a role, in vitro, in the folding of actin and tubulin. The chain is T-complex protein 1 subunit alpha from Tetrahymena pyriformis.